The following is a 148-amino-acid chain: Globin-3 (148 aa).

Positions 2–148 constitute a Globin domain; the sequence is TLTKHEQDIL…HVFPMMAAEI (147 aa). Residue H99 participates in heme binding.

Belongs to the globin family. In terms of assembly, monomer.

Its function is as follows. Oxygen binding protein. This Paramphistomum epiclitum protein is Globin-3.